We begin with the raw amino-acid sequence, 82 residues long: DNA-directed RNA polymerase subunit Rpo5 (82 aa).

The protein belongs to the archaeal Rpo5/eukaryotic RPB5 RNA polymerase subunit family. In terms of assembly, part of the RNA polymerase complex.

It localises to the cytoplasm. It carries out the reaction RNA(n) + a ribonucleoside 5'-triphosphate = RNA(n+1) + diphosphate. In terms of biological role, DNA-dependent RNA polymerase (RNAP) catalyzes the transcription of DNA into RNA using the four ribonucleoside triphosphates as substrates. In Pyrococcus abyssi (strain GE5 / Orsay), this protein is DNA-directed RNA polymerase subunit Rpo5.